The primary structure comprises 89 residues: Small ribosomal subunit protein uS14A (89 aa).

The protein belongs to the universal ribosomal protein uS14 family. In terms of assembly, part of the 30S ribosomal subunit. Contacts proteins S3 and S10.

Functionally, binds 16S rRNA, required for the assembly of 30S particles and may also be responsible for determining the conformation of the 16S rRNA at the A site. In Ligilactobacillus salivarius (strain UCC118) (Lactobacillus salivarius), this protein is Small ribosomal subunit protein uS14A.